The following is a 308-amino-acid chain: Aspartate carbamoyltransferase catalytic subunit (308 aa).

2 residues coordinate carbamoyl phosphate: Arg59 and Thr60. Lys87 contacts L-aspartate. 3 residues coordinate carbamoyl phosphate: Arg109, His139, and Gln142. L-aspartate contacts are provided by Arg172 and Arg224. The carbamoyl phosphate site is built by Ala265 and Pro266.

It belongs to the aspartate/ornithine carbamoyltransferase superfamily. ATCase family. In terms of assembly, heterododecamer (2C3:3R2) of six catalytic PyrB chains organized as two trimers (C3), and six regulatory PyrI chains organized as three dimers (R2).

It carries out the reaction carbamoyl phosphate + L-aspartate = N-carbamoyl-L-aspartate + phosphate + H(+). The protein operates within pyrimidine metabolism; UMP biosynthesis via de novo pathway; (S)-dihydroorotate from bicarbonate: step 2/3. Functionally, catalyzes the condensation of carbamoyl phosphate and aspartate to form carbamoyl aspartate and inorganic phosphate, the committed step in the de novo pyrimidine nucleotide biosynthesis pathway. This is Aspartate carbamoyltransferase catalytic subunit from Enterococcus faecalis (strain ATCC 700802 / V583).